Consider the following 473-residue polypeptide: 3-isopropylmalate dehydratase large subunit (473 aa).

[4Fe-4S] cluster contacts are provided by cysteine 354, cysteine 414, and cysteine 417.

The protein belongs to the aconitase/IPM isomerase family. LeuC type 1 subfamily. As to quaternary structure, heterodimer of LeuC and LeuD. It depends on [4Fe-4S] cluster as a cofactor.

It catalyses the reaction (2R,3S)-3-isopropylmalate = (2S)-2-isopropylmalate. The protein operates within amino-acid biosynthesis; L-leucine biosynthesis; L-leucine from 3-methyl-2-oxobutanoate: step 2/4. Its function is as follows. Catalyzes the isomerization between 2-isopropylmalate and 3-isopropylmalate, via the formation of 2-isopropylmaleate. This chain is 3-isopropylmalate dehydratase large subunit, found in Mycobacterium bovis (strain ATCC BAA-935 / AF2122/97).